Consider the following 510-residue polypeptide: Probable cytosol aminopeptidase (510 aa).

Mn(2+) is bound by residues Lys-282 and Asp-287. Residue Lys-294 is part of the active site. Residues Asp-305, Asp-364, and Glu-366 each coordinate Mn(2+). Arg-368 is a catalytic residue.

It belongs to the peptidase M17 family. Mn(2+) serves as cofactor.

It is found in the cytoplasm. It catalyses the reaction Release of an N-terminal amino acid, Xaa-|-Yaa-, in which Xaa is preferably Leu, but may be other amino acids including Pro although not Arg or Lys, and Yaa may be Pro. Amino acid amides and methyl esters are also readily hydrolyzed, but rates on arylamides are exceedingly low.. The enzyme catalyses Release of an N-terminal amino acid, preferentially leucine, but not glutamic or aspartic acids.. Functionally, presumably involved in the processing and regular turnover of intracellular proteins. Catalyzes the removal of unsubstituted N-terminal amino acids from various peptides. This chain is Probable cytosol aminopeptidase, found in Cupriavidus metallidurans (strain ATCC 43123 / DSM 2839 / NBRC 102507 / CH34) (Ralstonia metallidurans).